An 807-amino-acid chain; its full sequence is Glycerol-3-phosphate acyltransferase (807 aa).

The HXXXXD motif signature appears at 308–313 (CHRSHM).

The protein belongs to the GPAT/DAPAT family.

The protein localises to the cell inner membrane. The catalysed reaction is sn-glycerol 3-phosphate + an acyl-CoA = a 1-acyl-sn-glycero-3-phosphate + CoA. The protein operates within phospholipid metabolism; CDP-diacylglycerol biosynthesis; CDP-diacylglycerol from sn-glycerol 3-phosphate: step 1/3. This is Glycerol-3-phosphate acyltransferase from Shewanella sp. (strain MR-7).